The primary structure comprises 263 residues: Tryptophan synthase alpha chain (263 aa).

Residues glutamate 49 and aspartate 60 each act as proton acceptor in the active site.

Belongs to the TrpA family. In terms of assembly, tetramer of two alpha and two beta chains.

It catalyses the reaction (1S,2R)-1-C-(indol-3-yl)glycerol 3-phosphate + L-serine = D-glyceraldehyde 3-phosphate + L-tryptophan + H2O. It functions in the pathway amino-acid biosynthesis; L-tryptophan biosynthesis; L-tryptophan from chorismate: step 5/5. Functionally, the alpha subunit is responsible for the aldol cleavage of indoleglycerol phosphate to indole and glyceraldehyde 3-phosphate. This Jannaschia sp. (strain CCS1) protein is Tryptophan synthase alpha chain.